Consider the following 311-residue polypeptide: Thioredoxin reductase (311 aa).

An FAD-binding site is contributed by 35 to 42; it reads ERGIPGGQ. A disulfide bond links Cys134 and Cys137. 277–286 provides a ligand contact to FAD; that stretch reads DVRDKGLRQI.

Belongs to the class-II pyridine nucleotide-disulfide oxidoreductase family. Homodimer. The cofactor is FAD.

It localises to the cytoplasm. The enzyme catalyses [thioredoxin]-dithiol + NADP(+) = [thioredoxin]-disulfide + NADPH + H(+). In Staphylococcus aureus (strain COL), this protein is Thioredoxin reductase (trxB).